Reading from the N-terminus, the 598-residue chain is Transcription factor himD (598 aa).

Residues 18–47 constitute a DNA-binding region (zn(2)-C6 fungal-type); that stretch reads CQNCARAKIRCIRSVPTGSCDRCERLRKTC. The tract at residues 87–110 is disordered; it reads TVSEASIDDKSPTTTPTTPRPPPD.

Its subcellular location is the nucleus. In terms of biological role, transcription factor that, with himB, probably co-regulates the him gene cluster that mediates the biosynthesis of himeic acid A, a ubiquitin-activating enzyme (E1) inhibitor. This Aspergillus japonicus protein is Transcription factor himD.